The chain runs to 408 residues: Interferon-activable protein 203 (408 aa).

The Pyrin domain maps to 1 to 87 (MAEYKNIVLL…AKKLKTEKAK (87 aa)). A disordered region spans residues 84–208 (EKAKVQEKKK…EGHHQGPKQV (125 aa)). The segment covering 92–102 (KKGKCKTAGKK) has biased composition (basic residues). Over residues 150–159 (AQLPETSGTN) the composition is skewed to polar residues. The HIN-200 domain maps to 190 to 388 (TVPKEPSREE…SVRHSYMQVI (199 aa)).

This sequence belongs to the HIN-200 family. Constitutively expressed in the thymus, bone marrow and spleen. Isoform 1 and isoform 3 are present in liver (at protein level).

It is found in the nucleus. The sequence is that of Interferon-activable protein 203 (Ifi203) from Mus musculus (Mouse).